Here is a 642-residue protein sequence, read N- to C-terminus: GIKEADATECILAIKAGEADAITLDGGEIYTAGQHPYDLQPIISEKYGSGSSCYYAVAVVKKDTGFSFKQLRGKKSCHTGIGKTAGWNIPIGTLLTTGQLVWSGQEDLPVESVSTFFSKSCVPGAGGLVGGKLCTLCPSDCSKSATNPYFGYAGAFKCLKDDAGDVAFINHLTVPASEKANYELLCLDGTRAPIDSYKTCNLARVPAHAVVSRVDPELAERIFTALTTVTGFSFFSSAGFGAANLMFKDTTQSLVRLPDGSNSFLYLGAKYMASIQSLKKESDQPITPAIKWCAVGHAEKKKCDSWSSFSVSDGVKSVACQISLTVEGCFQRIMRQEADAMSVDGGQVYTAGKCQLIPAMVEQYNQSLCSSAGTPQATYFAVAVVKKGSGVTWDNLRGKRSCHTGLGRTAGWNIPMGLVHSIHGSCDFGGFFPSGCAPGSEPSSTFCRQCAGSGSGVEDGSKCSASSVEKYYGYAGAFRCLVDGAGDVAFIKHTIVADNSDGQGPAWATALKSSDYQLICPGGVGRAEISDFASCNLAAVPSHAVVTRQDIRDDVVKMLLDQQRKFGIDGSDPLFRIYESKDGNNLLFKDSTKCLKEIPSLTTADAFLGTGYVNAIMSLRQCPETASELEKTCISSSCSTAE.

Transferrin-like domains are found at residues 1–280 and 290–621; these read GIKE…SLKK and IKWC…SLRQ. Fe(3+) contacts are provided by aspartate 25 and tyrosine 54. 3 disulfides stabilise this stretch: cysteine 77–cysteine 158, cysteine 121–cysteine 137, and cysteine 186–cysteine 200. Residues threonine 79, lysine 83, alanine 85, and glycine 86 each coordinate hydrogencarbonate. Tyrosine 152 contacts Fe(3+). Histidine 208 lines the Fe(3+) pocket. Cystine bridges form between cysteine 293/cysteine 329 and cysteine 303/cysteine 320. Aspartate 344 serves as a coordination point for Fe(3+). 7 disulfide bridges follow: cysteine 354/cysteine 633, cysteine 369/cysteine 594, cysteine 402/cysteine 480, cysteine 426/cysteine 622, cysteine 436/cysteine 450, cysteine 447/cysteine 463, and cysteine 520/cysteine 535. The N-linked (GlcNAc...) asparagine glycan is linked to asparagine 365. Fe(3+) is bound at residue tyrosine 379. Residues threonine 404, arginine 408, alanine 410, and glycine 411 each coordinate hydrogencarbonate. Tyrosine 474 provides a ligand contact to Fe(3+). Histidine 543 lines the Fe(3+) pocket.

The protein belongs to the transferrin family. In terms of assembly, monomer. In terms of tissue distribution, brain and liver; to a lesser extent in kidney and heart.

It localises to the secreted. Functionally, transferrins are iron binding transport proteins which can bind two Fe(3+) ions in association with the binding of an anion, usually bicarbonate. In Gadus morhua (Atlantic cod), this protein is Serotransferrin (tf).